We begin with the raw amino-acid sequence, 84 residues long: U4-theraphotoxin-Hhn1ac (84 aa).

An N-terminal signal peptide occupies residues 1–22 (MKVTLIAILTCAAVLVLHTTAA). The propeptide occupies 23-47 (EELEESQLMEVGMPDTELAAVDEER). Intrachain disulfides connect cysteine 51–cysteine 65, cysteine 55–cysteine 76, and cysteine 70–cysteine 81.

This sequence belongs to the neurotoxin 12 (Hwtx-2) family. 02 (Hwtx-2) subfamily. Expressed by the venom gland.

It localises to the secreted. Functionally, postsynaptic neurotoxin. The protein is U4-theraphotoxin-Hhn1ac of Cyriopagopus hainanus (Chinese bird spider).